The chain runs to 1095 residues: DNA-directed RNA polymerase subunit beta (1095 aa).

Residues 1069–1095 form a disordered region; that stretch reads DLMQDVNPRRSTPSRPTYESLGKEYEE.

Belongs to the RNA polymerase beta chain family. In cyanobacteria the RNAP catalytic core is composed of 2 alpha, 1 beta, 1 beta', 1 gamma and 1 omega subunit. When a sigma factor is associated with the core the holoenzyme is formed, which can initiate transcription.

The catalysed reaction is RNA(n) + a ribonucleoside 5'-triphosphate = RNA(n+1) + diphosphate. Its function is as follows. DNA-dependent RNA polymerase catalyzes the transcription of DNA into RNA using the four ribonucleoside triphosphates as substrates. This Prochlorococcus marinus (strain NATL1A) protein is DNA-directed RNA polymerase subunit beta.